We begin with the raw amino-acid sequence, 931 residues long: MTTGFLQKIFGSRNQRLVKQYQKTVETINALETQIEQLTDDQLRGKTDEFRQRVAAGESLDKLLPEAFAVCREASRRVLKMRHFDVQLIGGMVLHYGKIAEMRTGEGKTLVATLPVYLNALAGRGVHVVTVNDYLAQRDAEWMARLYNFLGLSVGINLSGMEHEQKQQAYASDITYGTNNEFGFDYLRDNMVYETEARVQRALNFAVVDEVDSILIDEARTPLIISGQAEDHTELYVRMNALPPLLERQIGEEKADGTGVEKPGDYTLDEKSRQVFLTESGHEKAERLLAEWGLIGEGESLYAPQNITLMHHVYAALRAHTLFYKDQHYVVQNGEVVIVDEFTGRLMAGRRWSDGLHQAVEAKEHVKIQSENQTLASITFQNYFRMYAKLAGMTGTADTEAYEFNEIYGLETVVIPTNRPPKRIDKQDQIYKTAKERYDAVIRDIRECYERGQPVLVGTTSIENSELLSHLLKQAGLPHEVLNAKQHEREAAIVAEAGRPKRITIATNMAGRGTDIVLGGNAEKQAAFIEADEAIPADEKARRIKQLHDEWETLHEQVKAAGGLHIIGTERHESRRIDNQLRGRAGRQGDPGSSRFYLSLDDPLLRIFAGDRVRSIMDRLKMPEGEAIEAGIVTRSIESAQRKVEARNFDIRKQLLEYDDVSNDQRKVIYQQRNELLEAHDITETISAMRHGVITEVVRQFVPEGSIEEQWDVPELEEALRNDWQLDLAIQEMVNESSSITADEILDAVTTAADEQYEAKVAMVGRESFSAFERSVMLQTVDRLWREHLAALDHLRQGIHLRGYAQKNPKQEYKREAFELFAAMLDAIKQEVTRIVMNVQIQSPEQLEEAAEQIEERSGHLENVEYQHADYAESGAPVANVAAATAATATADMVGSAMTHGHGGELPKVGRNDPCPCGSGKKYKQCHGKLS.

ATP contacts are provided by residues Q87, 105–109 (GEGKT), and D515. Zn(2+)-binding residues include C915, C917, C926, and H927.

Belongs to the SecA family. Monomer and homodimer. Part of the essential Sec protein translocation apparatus which comprises SecA, SecYEG and auxiliary proteins SecDF-YajC and YidC. Requires Zn(2+) as cofactor.

It is found in the cell inner membrane. The protein resides in the cytoplasm. It catalyses the reaction ATP + H2O + cellular proteinSide 1 = ADP + phosphate + cellular proteinSide 2.. Functionally, part of the Sec protein translocase complex. Interacts with the SecYEG preprotein conducting channel. Has a central role in coupling the hydrolysis of ATP to the transfer of proteins into and across the cell membrane, serving both as a receptor for the preprotein-SecB complex and as an ATP-driven molecular motor driving the stepwise translocation of polypeptide chains across the membrane. The polypeptide is Protein translocase subunit SecA (Burkholderia ambifaria (strain MC40-6)).